The sequence spans 200 residues: UPF0637 protein LCK_01372 (200 aa).

This sequence belongs to the UPF0637 family.

In Leuconostoc citreum (strain KM20), this protein is UPF0637 protein LCK_01372.